A 439-amino-acid polypeptide reads, in one-letter code: MSTIFALCTPWGKSGVAVIRVSGQDAVKTFMHFKISNAIKPRVATFTPLYNAAHEVIDEVIVVYFSAPNSFTGEDVVELHTHGSIAVIRMILCELGKIFIPAGPGEFSLRAFLNNKVDLTRAEAIVDLINAETEMQAKQAIRQMSGSLEKLYQSWRQQLIDVLSNMEAYIDFPEEVTSSAVENISFLLDKIKESLENHLNDGRKGEILRQGIYVAILGEPNSGKSTLFNHLAKRDIAIVSEYAGTTRDVLETHIDIAGYPIVIIDTAGIRDSNDPVEQEGIRRAKLKAESADFKIIMLPYEKKDALNNEIIDLIDDRSICVLSKSDSIITQNLININNINFIPVSVCCNLGIEHLLSAIQKKVEADFKFCSTSPFITSERQRVHIQNAVNILKNISFELPMELISEDLRLSVRELEKVVGVISNEEILDNVFGKFCIGK.

The (6S)-5-formyl-5,6,7,8-tetrahydrofolate site is built by arginine 20, glutamate 78, and lysine 116. In terms of domain architecture, TrmE-type G spans 211–364; that stretch reads GIYVAILGEP…LLSAIQKKVE (154 aa). GTP contacts are provided by residues 221–226, 240–246, and 265–268; these read NSGKST, SEYAGTT, and DTAG. The Mg(2+) site is built by serine 225 and threonine 246. Lysine 439 is a (6S)-5-formyl-5,6,7,8-tetrahydrofolate binding site.

It belongs to the TRAFAC class TrmE-Era-EngA-EngB-Septin-like GTPase superfamily. TrmE GTPase family. As to quaternary structure, homodimer. Heterotetramer of two MnmE and two MnmG subunits. It depends on K(+) as a cofactor.

Its subcellular location is the cytoplasm. In terms of biological role, exhibits a very high intrinsic GTPase hydrolysis rate. Involved in the addition of a carboxymethylaminomethyl (cmnm) group at the wobble position (U34) of certain tRNAs, forming tRNA-cmnm(5)s(2)U34. The protein is tRNA modification GTPase MnmE of Ehrlichia ruminantium (strain Welgevonden).